Reading from the N-terminus, the 259-residue chain is Tumor necrosis factor receptor superfamily member 10C (259 aa).

The signal sequence occupies residues 1-25 (MARIPKTLKFVVVIVAVLLPVLAYS). TNFR-Cys repeat units follow at residues 29–66 (ARQE…TGAC), 69–109 (CTEG…DTVC), and 110–149 (QCKE…DIQC). Over residues 30 to 45 (RQEEVPQQTVAPQQQR) the composition is skewed to polar residues. Positions 30-56 (RQEEVPQQTVAPQQQRHSFKGEECPAG) are disordered. Cystine bridges form between C53–C66, C69–C85, C88–C101, C91–C109, C111–C125, C128–C141, and C131–C149. N77 carries N-linked (GlcNAc...) (high mannose) asparagine glycosylation. N-linked (GlcNAc...) (high mannose) asparagine glycans are attached at residues N140 and N156. The segment at 160–224 (ETPAAEETMN…TSPGTPAPAA (65 aa)) is disordered. 5 TAPE repeats span residues 162-176 (PAAE…GTPA), 177-191 (PAAE…GTPA), 192-206 (PAAE…GTPA), 207-221 (PAAE…GTPA), and 222-236 (PAAE…GTPA). A compositionally biased stretch (low complexity) spans 185–217 (TSPGTPAPAAEETMTTSPGTPAPAAEETMTTSP). The GPI-anchor amidated alanine moiety is linked to residue A236. A propeptide spans 237–259 (SSHYLSCTIVGIIVLIVLLIVFV) (removed in mature form).

Post-translationally, N-glycosylated and O-glycosylated. Higher expression in normal tissues than in tumor cell lines. Highly expressed in peripheral blood lymphocytes, spleen, skeletal muscle, placenta, lung and heart.

The protein localises to the cell membrane. Its function is as follows. Receptor for the cytotoxic ligand TRAIL. Lacks a cytoplasmic death domain and hence is not capable of inducing apoptosis. May protect cells against TRAIL mediated apoptosis by competing with TRAIL-R1 and R2 for binding to the ligand. The chain is Tumor necrosis factor receptor superfamily member 10C (TNFRSF10C) from Homo sapiens (Human).